Here is a 563-residue protein sequence, read N- to C-terminus: Mitochondrial distribution and morphology protein 34 (563 aa).

The SMP-LTD domain occupies 1 to 195 (MAFNFNWSPL…LPAIIHRLSL (195 aa)). Disordered stretches follow at residues 298 to 499 (ERGD…PHTP) and 531 to 563 (ARRQ…PKAL). Composition is skewed to polar residues over residues 303–332 (AGTT…FSNR) and 346–357 (SLVNMNSATTGL). Residues 365 to 383 (SRSHPTRKKKNRVVNLRKP) are compositionally biased toward basic residues. Over residues 386–407 (TESSESGESETASTTAVSEPTV) the composition is skewed to low complexity. Composition is skewed to polar residues over residues 458–471 (PSLT…INTQ) and 478–488 (YNQSASTSYTP). Residues 531-540 (ARRQHDDKTA) are compositionally biased toward basic and acidic residues.

Belongs to the MDM34 family. As to quaternary structure, component of the ER-mitochondria encounter structure (ERMES) or MDM complex, composed of MMM1, MDM10, MDM12 and MDM34.

It localises to the mitochondrion outer membrane. In terms of biological role, component of the ERMES/MDM complex, which serves as a molecular tether to connect the endoplasmic reticulum (ER) and mitochondria. Components of this complex are involved in the control of mitochondrial shape and protein biogenesis, and function in nonvesicular lipid trafficking between the ER and mitochondria. MDM34 is required for the interaction of the ER-resident membrane protein MMM1 and the outer mitochondrial membrane-resident beta-barrel protein MDM10. This is Mitochondrial distribution and morphology protein 34 from Botryotinia fuckeliana (strain B05.10) (Noble rot fungus).